The chain runs to 211 residues: ATP phosphoribosyltransferase (211 aa).

It belongs to the ATP phosphoribosyltransferase family. Short subfamily. Heteromultimer composed of HisG and HisZ subunits.

Its subcellular location is the cytoplasm. It catalyses the reaction 1-(5-phospho-beta-D-ribosyl)-ATP + diphosphate = 5-phospho-alpha-D-ribose 1-diphosphate + ATP. It functions in the pathway amino-acid biosynthesis; L-histidine biosynthesis; L-histidine from 5-phospho-alpha-D-ribose 1-diphosphate: step 1/9. In terms of biological role, catalyzes the condensation of ATP and 5-phosphoribose 1-diphosphate to form N'-(5'-phosphoribosyl)-ATP (PR-ATP). Has a crucial role in the pathway because the rate of histidine biosynthesis seems to be controlled primarily by regulation of HisG enzymatic activity. This chain is ATP phosphoribosyltransferase, found in Bacillus cereus (strain AH187).